Here is a 217-residue protein sequence, read N- to C-terminus: Adenylate kinase (217 aa).

10-15 (GAGKGT) provides a ligand contact to ATP. Positions 30–59 (STGDIFRAAMKNETPMGIEAKKYIDKGELV) are NMP. AMP is bound by residues threonine 31, arginine 36, 57–59 (ELV), 85–88 (GFPR), and glutamine 92. An LID region spans residues 126 to 164 (GRFICRNCGATYHKLYNAPKVEGTCDVCGHHEFYQRDDD). Arginine 127 lines the ATP pocket. Zn(2+) contacts are provided by cysteine 130 and cysteine 133. 136–137 (TY) is an ATP binding site. Cysteine 150 and cysteine 153 together coordinate Zn(2+). AMP contacts are provided by arginine 161 and arginine 172. Residue glutamine 200 participates in ATP binding.

This sequence belongs to the adenylate kinase family. Monomer.

The protein localises to the cytoplasm. It catalyses the reaction AMP + ATP = 2 ADP. It functions in the pathway purine metabolism; AMP biosynthesis via salvage pathway; AMP from ADP: step 1/1. In terms of biological role, catalyzes the reversible transfer of the terminal phosphate group between ATP and AMP. Plays an important role in cellular energy homeostasis and in adenine nucleotide metabolism. The polypeptide is Adenylate kinase (Limosilactobacillus reuteri subsp. reuteri (strain JCM 1112) (Lactobacillus reuteri)).